A 214-amino-acid chain; its full sequence is Imidazole glycerol phosphate synthase subunit HisH (214 aa).

A Glutamine amidotransferase type-1 domain is found at 3–211 (IIAVIDYDMG…VEQVQATLAT (209 aa)). C81 serves as the catalytic Nucleophile. Residues H186 and E188 contribute to the active site.

In terms of assembly, heterodimer of HisH and HisF.

The protein localises to the cytoplasm. It carries out the reaction 5-[(5-phospho-1-deoxy-D-ribulos-1-ylimino)methylamino]-1-(5-phospho-beta-D-ribosyl)imidazole-4-carboxamide + L-glutamine = D-erythro-1-(imidazol-4-yl)glycerol 3-phosphate + 5-amino-1-(5-phospho-beta-D-ribosyl)imidazole-4-carboxamide + L-glutamate + H(+). The enzyme catalyses L-glutamine + H2O = L-glutamate + NH4(+). It participates in amino-acid biosynthesis; L-histidine biosynthesis; L-histidine from 5-phospho-alpha-D-ribose 1-diphosphate: step 5/9. Functionally, IGPS catalyzes the conversion of PRFAR and glutamine to IGP, AICAR and glutamate. The HisH subunit catalyzes the hydrolysis of glutamine to glutamate and ammonia as part of the synthesis of IGP and AICAR. The resulting ammonia molecule is channeled to the active site of HisF. This chain is Imidazole glycerol phosphate synthase subunit HisH, found in Acaryochloris marina (strain MBIC 11017).